The chain runs to 99 residues: Class II hydrophobin 2 (99 aa).

The first 15 residues, 1–15 (MKFFVVAALFAGALA), serve as a signal peptide directing secretion. Cystine bridges form between Cys-30-Cys-79 and Cys-40-Cys-70.

Belongs to the cerato-ulmin hydrophobin family. As to quaternary structure, homotetramer. Further self-assembles to form highly ordered films at water-air interfaces through intermolecular interactions.

It is found in the secreted. Its subcellular location is the cell wall. Functionally, aerial growth, conidiation, and dispersal of filamentous fungi in the environment rely upon a capability of their secreting small amphipathic proteins called hydrophobins (HPBs) with low sequence identity. Class I can self-assemble into an outermost layer of rodlet bundles on aerial cell surfaces, conferring cellular hydrophobicity that supports fungal growth, development and dispersal; whereas Class II form highly ordered films at water-air interfaces through intermolecular interactions but contribute nothing to the rodlet structure. HYD2 is a class II hydrophobin that contributes to the fruiting body development. In Cordyceps militaris (Caterpillar fungus), this protein is Class II hydrophobin 2.